The following is a 227-amino-acid chain: Uracil-DNA glycosylase (227 aa).

D65 (proton acceptor) is an active-site residue.

The protein belongs to the uracil-DNA glycosylase (UDG) superfamily. UNG family.

It localises to the cytoplasm. The enzyme catalyses Hydrolyzes single-stranded DNA or mismatched double-stranded DNA and polynucleotides, releasing free uracil.. Its function is as follows. Excises uracil residues from the DNA which can arise as a result of misincorporation of dUMP residues by DNA polymerase or due to deamination of cytosine. In Lactobacillus delbrueckii subsp. bulgaricus (strain ATCC BAA-365 / Lb-18), this protein is Uracil-DNA glycosylase.